Here is a 198-residue protein sequence, read N- to C-terminus: Probable GTP-binding protein EngB (198 aa).

Residues 22–195 (DLPEIALAGR…WKAIHKMTKT (174 aa)) form the EngB-type G domain. Residues 30–37 (GRSNVGKS), 57–61 (GKTQT), 75–78 (DVPG), 142–145 (TKAD), and 174–176 (FSS) each bind GTP. S37 and T59 together coordinate Mg(2+).

It belongs to the TRAFAC class TrmE-Era-EngA-EngB-Septin-like GTPase superfamily. EngB GTPase family. Mg(2+) serves as cofactor.

Functionally, necessary for normal cell division and for the maintenance of normal septation. The protein is Probable GTP-binding protein EngB of Bacillus cereus (strain G9842).